A 350-amino-acid polypeptide reads, in one-letter code: MSQSTLLFQIEPASRAQDQFIQQKIDLKTKPPGALGLLEPLALQIARIQGPKQLEIVNPTMLVFAGDHGIAAEGVSIAPSEVTRQMVQNFAHGGAAINVFCRQLGFNLEVIDCGILTPVEGVEGIIDQRLGAGTGAIHLEPAMSLACVDKGFAMAQALIERHHQAGCNLVAFGEMGIGNTSSAAAIMAAIMQLDVADCVGRGTGISSETLERKQMLIELALLLHQSAMTGPKQVLACLGGFEIVQMTGAMLAAAERKMLVVVDGFIATAAALVAVTINAHVRDYLIFAHRSEEQGHQRMLEHLKAKPLLSLGLRLGEGTGAALALPLIQAAVNFYNQMASFSDAGIEAVV.

E317 serves as the catalytic Proton acceptor.

This sequence belongs to the CobT family.

The catalysed reaction is 5,6-dimethylbenzimidazole + nicotinate beta-D-ribonucleotide = alpha-ribazole 5'-phosphate + nicotinate + H(+). It functions in the pathway nucleoside biosynthesis; alpha-ribazole biosynthesis; alpha-ribazole from 5,6-dimethylbenzimidazole: step 1/2. In terms of biological role, catalyzes the synthesis of alpha-ribazole-5'-phosphate from nicotinate mononucleotide (NAMN) and 5,6-dimethylbenzimidazole (DMB). The chain is Nicotinate-nucleotide--dimethylbenzimidazole phosphoribosyltransferase from Shewanella sp. (strain MR-4).